A 109-amino-acid polypeptide reads, in one-letter code: Larval cuticle protein 1 (109 aa).

The first 14 residues, 1-14 (MILVALALVALAVA), serve as a signal peptide directing secretion. The Chitin-binding type R&amp;R domain maps to 34 to 107 (EGSYQFGFET…AEGSSIPKPA (74 aa)).

Its function is as follows. Component of the cuticle of the larva of Helicoverpa armigera. This Helicoverpa armigera (Cotton bollworm) protein is Larval cuticle protein 1 (LCP1).